Reading from the N-terminus, the 367-residue chain is Putrescine/agmatine-binding protein (367 aa).

The first 19 residues, 1–19, serve as a signal peptide directing secretion; that stretch reads MKKVCALALSILTTIGATA.

This sequence belongs to the bacterial solute-binding protein 1 family.

It is found in the periplasm. In terms of biological role, binds putrescine and agmatine. This chain is Putrescine/agmatine-binding protein, found in Pseudomonas aeruginosa (strain ATCC 15692 / DSM 22644 / CIP 104116 / JCM 14847 / LMG 12228 / 1C / PRS 101 / PAO1).